We begin with the raw amino-acid sequence, 110 residues long: Thiosulfate sulfurtransferase GlpE (110 aa).

The Rhodanese domain occupies 17–105; the sequence is RENGAQVVDI…WRSVYPADTS (89 aa). Residue C65 is the Cysteine persulfide intermediate of the active site.

The protein belongs to the GlpE family.

The protein resides in the cytoplasm. It catalyses the reaction thiosulfate + hydrogen cyanide = thiocyanate + sulfite + 2 H(+). The enzyme catalyses thiosulfate + [thioredoxin]-dithiol = [thioredoxin]-disulfide + hydrogen sulfide + sulfite + 2 H(+). In terms of biological role, transferase that catalyzes the transfer of sulfur from thiosulfate to thiophilic acceptors such as cyanide or dithiols. May function in a CysM-independent thiosulfate assimilation pathway by catalyzing the conversion of thiosulfate to sulfite, which can then be used for L-cysteine biosynthesis. The chain is Thiosulfate sulfurtransferase GlpE from Pseudomonas aeruginosa (strain LESB58).